The primary structure comprises 397 residues: Enoyl-[acyl-carrier-protein] reductase [NADH] (397 aa).

Residues 48-53, 74-75, 111-112, and 139-140 contribute to the NAD(+) site; these read GASTGY, FE, DA, and VA. Tyr-225 contacts substrate. Tyr-235 (proton donor) is an active-site residue. NAD(+) contacts are provided by residues Lys-244 and 273–275; that span reads VVT.

Belongs to the TER reductase family. As to quaternary structure, monomer.

It catalyses the reaction a 2,3-saturated acyl-[ACP] + NAD(+) = a (2E)-enoyl-[ACP] + NADH + H(+). It functions in the pathway lipid metabolism; fatty acid biosynthesis. In terms of biological role, involved in the final reduction of the elongation cycle of fatty acid synthesis (FAS II). Catalyzes the reduction of a carbon-carbon double bond in an enoyl moiety that is covalently linked to an acyl carrier protein (ACP). The protein is Enoyl-[acyl-carrier-protein] reductase [NADH] of Burkholderia pseudomallei (strain K96243).